Reading from the N-terminus, the 200-residue chain is Holliday junction branch migration complex subunit RuvA (200 aa).

The tract at residues 1-64 (MFTYFRGELI…EDLMQLFGFL (64 aa)) is domain I. The interval 65–143 (EEEERQLFRL…KLRPSGGTKS (79 aa)) is domain II. The segment at 144–148 (VSRLS) is flexible linker. The interval 148-200 (SESSMRDDAVNALVTLGFLRSVAQKAVTESLTSLRNPQVEDLVRDALLTIRTP) is domain III.

Belongs to the RuvA family. Homotetramer. Forms an RuvA(8)-RuvB(12)-Holliday junction (HJ) complex. HJ DNA is sandwiched between 2 RuvA tetramers; dsDNA enters through RuvA and exits via RuvB. An RuvB hexamer assembles on each DNA strand where it exits the tetramer. Each RuvB hexamer is contacted by two RuvA subunits (via domain III) on 2 adjacent RuvB subunits; this complex drives branch migration. In the full resolvosome a probable DNA-RuvA(4)-RuvB(12)-RuvC(2) complex forms which resolves the HJ.

It localises to the cytoplasm. Functionally, the RuvA-RuvB-RuvC complex processes Holliday junction (HJ) DNA during genetic recombination and DNA repair, while the RuvA-RuvB complex plays an important role in the rescue of blocked DNA replication forks via replication fork reversal (RFR). RuvA specifically binds to HJ cruciform DNA, conferring on it an open structure. The RuvB hexamer acts as an ATP-dependent pump, pulling dsDNA into and through the RuvAB complex. HJ branch migration allows RuvC to scan DNA until it finds its consensus sequence, where it cleaves and resolves the cruciform DNA. The sequence is that of Holliday junction branch migration complex subunit RuvA from Chlorobium phaeobacteroides (strain BS1).